Reading from the N-terminus, the 134-residue chain is Replication enhancer protein (134 aa).

It belongs to the geminiviridae replication enhancer protein family. Homooligomer. Interacts with the replication-associated protein (REP). Interacts with host proliferating cell nuclear antigen (PCNA). Interacts with host retinoblastoma-related protein 1 (RBR1), and may thereby deregulate the host cell cycle. Oligomerization and interaction with PCNA are necessary for optimal replication enhancement.

Functionally, increases viral DNA accumulation. Enhances infectivity and symptom expression. The chain is Replication enhancer protein from Mungbean yellow mosaic virus (strain Vigna) (MYMV).